Consider the following 381-residue polypeptide: 3-isopropylmalate dehydrogenase (381 aa).

Positions 104, 114, 142, and 232 each coordinate substrate. Residues Asp-232, Asp-256, and Asp-260 each contribute to the Mg(2+) site. 290-302 (GSAPDIAGQDKAN) contributes to the NAD(+) binding site.

This sequence belongs to the isocitrate and isopropylmalate dehydrogenases family. LeuB type 1 subfamily. As to quaternary structure, homodimer. It depends on Mg(2+) as a cofactor. Mn(2+) serves as cofactor.

The protein resides in the cytoplasm. It carries out the reaction (2R,3S)-3-isopropylmalate + NAD(+) = 4-methyl-2-oxopentanoate + CO2 + NADH. Its pathway is amino-acid biosynthesis; L-leucine biosynthesis; L-leucine from 3-methyl-2-oxobutanoate: step 3/4. Catalyzes the oxidation of 3-carboxy-2-hydroxy-4-methylpentanoate (3-isopropylmalate) to 3-carboxy-4-methyl-2-oxopentanoate. The product decarboxylates to 4-methyl-2 oxopentanoate. This is 3-isopropylmalate dehydrogenase from Synechococcus sp. (strain JA-3-3Ab) (Cyanobacteria bacterium Yellowstone A-Prime).